The primary structure comprises 291 residues: Tetrahydromethanopterin:alpha-L-glutamate ligase (291 aa).

One can recognise an ATP-grasp domain in the interval 101–286 (SVFLELNNLP…IADKLLEKII (186 aa)). Residues lysine 136, 175–187 (QEFI…EHRD), and arginine 203 contribute to the ATP site. Aspartate 247, glutamate 259, and asparagine 261 together coordinate Mg(2+). The Mn(2+) site is built by aspartate 247, glutamate 259, and asparagine 261.

It belongs to the RimK family. MptN subfamily. In terms of assembly, homodimer. Requires Mg(2+) as cofactor. Mn(2+) serves as cofactor.

It catalyses the reaction 5,6,7,8-tetrahydromethanopterin + L-glutamate + ATP = 5,6,7,8-tetrahydrosarcinapterin + ADP + phosphate + H(+). It participates in cofactor biosynthesis; 5,6,7,8-tetrahydrosarcinapterin biosynthesis. Functionally, catalyzes the ATP or GTP-dependent addition of one L-glutamate molecule to tetrahydromethanopterin, producing tetrahydrosarcinapterin. In Methanocaldococcus jannaschii (strain ATCC 43067 / DSM 2661 / JAL-1 / JCM 10045 / NBRC 100440) (Methanococcus jannaschii), this protein is Tetrahydromethanopterin:alpha-L-glutamate ligase (mptN).